Here is a 715-residue protein sequence, read N- to C-terminus: Lanosterol synthase erg7B (715 aa).

A PFTB 1 repeat occupies alanine 111–glycine 153. Aspartate 445 acts as the Proton donor in catalysis. PFTB repeat units follow at residues isoleucine 550 to glycine 590 and valine 599 to threonine 640.

It belongs to the terpene cyclase/mutase family.

It localises to the lipid droplet. Its subcellular location is the endoplasmic reticulum membrane. It catalyses the reaction (S)-2,3-epoxysqualene = lanosterol. Its pathway is steroid metabolism; ergosterol biosynthesis. Its function is as follows. Lanosterol synthase; part of the third module of ergosterol biosynthesis pathway that includes the late steps of the pathway. ERG7A and ERG7B catalyze the cyclization of (S)-2,3 oxidosqualene to lanosterol, a reaction that forms the sterol core. The third module or late pathway involves the ergosterol synthesis itself through consecutive reactions that mainly occur in the endoplasmic reticulum (ER) membrane. Firstly, the squalene synthase erg9 catalyzes the condensation of 2 farnesyl pyrophosphate moieties to form squalene, which is the precursor of all steroids. Squalene synthase is crucial for balancing the incorporation of farnesyl diphosphate (FPP) into sterol and nonsterol isoprene synthesis. Secondly, squalene is converted into lanosterol by the consecutive action of the squalene epoxidase erg1 and the lanosterol synthase erg7. Then, the delta(24)-sterol C-methyltransferase erg6 methylates lanosterol at C-24 to produce eburicol. Eburicol is the substrate of the sterol 14-alpha demethylase encoded by cyp51A and cyp51B, to yield 4,4,24-trimethyl ergosta-8,14,24(28)-trienol. The C-14 reductase erg24 then reduces the C14=C15 double bond which leads to 4,4-dimethylfecosterol. A sequence of further demethylations at C-4, involving the C-4 demethylation complex containing the C-4 methylsterol oxidases erg25A or erg25B, the sterol-4-alpha-carboxylate 3-dehydrogenase erg26 and the 3-keto-steroid reductase erg27, leads to the production of fecosterol via 4-methylfecosterol. The C-8 sterol isomerase erg2 then catalyzes the reaction which results in unsaturation at C-7 in the B ring of sterols and thus converts fecosterol to episterol. The sterol-C5-desaturase erg3B then catalyzes the introduction of a C-5 double bond in the B ring to produce 5-dehydroepisterol. The 2 other sterol-C5-desaturases, erg3A and erg3C, seem to be less important in ergosterol biosynthesis. The C-22 sterol desaturase erg5 further converts 5-dehydroepisterol into ergosta-5,7,22,24(28)-tetraen-3beta-ol by forming the C-22(23) double bond in the sterol side chain. Finally, ergosta-5,7,22,24(28)-tetraen-3beta-ol is substrate of the C-24(28) sterol reductases erg4A and erg4B to produce ergosterol. Possible alternative sterol biosynthetic pathways might exist from fecosterol to ergosterol, depending on the activities of the erg3 isoforms. The protein is Lanosterol synthase erg7B of Aspergillus fumigatus (strain ATCC MYA-4609 / CBS 101355 / FGSC A1100 / Af293) (Neosartorya fumigata).